A 485-amino-acid chain; its full sequence is UDP-N-acetylmuramate--L-alanine ligase (485 aa).

129–135 lines the ATP pocket; the sequence is GTHGKTT.

The protein belongs to the MurCDEF family.

It is found in the cytoplasm. It catalyses the reaction UDP-N-acetyl-alpha-D-muramate + L-alanine + ATP = UDP-N-acetyl-alpha-D-muramoyl-L-alanine + ADP + phosphate + H(+). Its pathway is cell wall biogenesis; peptidoglycan biosynthesis. Its function is as follows. Cell wall formation. The sequence is that of UDP-N-acetylmuramate--L-alanine ligase from Vibrio campbellii (strain ATCC BAA-1116).